The following is a 485-amino-acid chain: Membrane-bound lytic murein transglycosylase F (485 aa).

The N-terminal stretch at 1 to 29 (MFAHTALRQRCAKWLLATGLFLLLGACVE) is a signal peptide. The tract at residues 30 to 267 (KPSTLERVKE…RLKDRYYGHV (238 aa)) is non-LT domain. The segment at 268–485 (DVLGYVGAYT…DKPADKSSPM (218 aa)) is LT domain. The active site involves Glu-314. The segment at 465 to 485 (EGNLHVPGVNKDKPADKSSPM) is disordered. The span at 474-485 (NKDKPADKSSPM) shows a compositional bias: basic and acidic residues.

The protein in the N-terminal section; belongs to the bacterial solute-binding protein 3 family. It in the C-terminal section; belongs to the transglycosylase Slt family.

Its subcellular location is the cell outer membrane. It catalyses the reaction Exolytic cleavage of the (1-&gt;4)-beta-glycosidic linkage between N-acetylmuramic acid (MurNAc) and N-acetylglucosamine (GlcNAc) residues in peptidoglycan, from either the reducing or the non-reducing ends of the peptidoglycan chains, with concomitant formation of a 1,6-anhydrobond in the MurNAc residue.. In terms of biological role, murein-degrading enzyme that degrades murein glycan strands and insoluble, high-molecular weight murein sacculi, with the concomitant formation of a 1,6-anhydromuramoyl product. Lytic transglycosylases (LTs) play an integral role in the metabolism of the peptidoglycan (PG) sacculus. Their lytic action creates space within the PG sacculus to allow for its expansion as well as for the insertion of various structures such as secretion systems and flagella. The sequence is that of Membrane-bound lytic murein transglycosylase F from Pseudomonas putida (strain ATCC 47054 / DSM 6125 / CFBP 8728 / NCIMB 11950 / KT2440).